Consider the following 286-residue polypeptide: Polyamine aminopropyltransferase (286 aa).

The 234-residue stretch at 5–238 (KTWHEKLYCH…GVMVFAWGTN (234 aa)) folds into the PABS domain. His-64 and Asp-88 together coordinate spermidine. S-methyl-5'-thioadenosine-binding positions include Glu-108 and 140–141 (DG). Asp-158 functions as the Proton acceptor in the catalytic mechanism. 158–161 (DSTD) contributes to the spermidine binding site.

The protein belongs to the spermidine/spermine synthase family. As to quaternary structure, homodimer or homotetramer.

The protein resides in the cytoplasm. The enzyme catalyses S-adenosyl 3-(methylsulfanyl)propylamine + putrescine = S-methyl-5'-thioadenosine + spermidine + H(+). It participates in amine and polyamine biosynthesis; spermidine biosynthesis; spermidine from putrescine: step 1/1. Catalyzes the irreversible transfer of a propylamine group from the amino donor S-adenosylmethioninamine (decarboxy-AdoMet) to putrescine (1,4-diaminobutane) to yield spermidine. The sequence is that of Polyamine aminopropyltransferase from Buchnera aphidicola subsp. Acyrthosiphon pisum (strain 5A).